Here is a 150-residue protein sequence, read N- to C-terminus: SsrA-binding protein (150 aa).

The protein belongs to the SmpB family.

It is found in the cytoplasm. Its function is as follows. Required for rescue of stalled ribosomes mediated by trans-translation. Binds to transfer-messenger RNA (tmRNA), required for stable association of tmRNA with ribosomes. tmRNA and SmpB together mimic tRNA shape, replacing the anticodon stem-loop with SmpB. tmRNA is encoded by the ssrA gene; the 2 termini fold to resemble tRNA(Ala) and it encodes a 'tag peptide', a short internal open reading frame. During trans-translation Ala-aminoacylated tmRNA acts like a tRNA, entering the A-site of stalled ribosomes, displacing the stalled mRNA. The ribosome then switches to translate the ORF on the tmRNA; the nascent peptide is terminated with the 'tag peptide' encoded by the tmRNA and targeted for degradation. The ribosome is freed to recommence translation, which seems to be the essential function of trans-translation. In Borreliella afzelii (strain PKo) (Borrelia afzelii), this protein is SsrA-binding protein.